Here is a 501-residue protein sequence, read N- to C-terminus: Xylulose kinase (501 aa).

Residue 81–82 (MH) coordinates substrate. The active-site Proton acceptor is Asp-239.

It belongs to the FGGY kinase family.

It catalyses the reaction D-xylulose + ATP = D-xylulose 5-phosphate + ADP + H(+). Catalyzes the phosphorylation of D-xylulose to D-xylulose 5-phosphate. This chain is Xylulose kinase, found in Lactococcus lactis subsp. lactis (strain IL1403) (Streptococcus lactis).